Here is a 148-residue protein sequence, read N- to C-terminus: Sec-independent protein translocase protein TatB (148 aa).

A helical transmembrane segment spans residues 2–22 (FNDIGPLELVTLVVLAVLVFG). Composition is skewed to basic and acidic residues over residues 100 to 110 (VTDAVHGRESE) and 128 to 148 (MTKKREQLEADERPPFDADAT). The tract at residues 100-148 (VTDAVHGRESETSASSSSANGSAGGTVDMTKKREQLEADERPPFDADAT) is disordered.

Belongs to the TatB family. In terms of assembly, the Tat system comprises two distinct complexes: a TatABC complex, containing multiple copies of TatA, TatB and TatC subunits, and a separate TatA complex, containing only TatA subunits. Substrates initially bind to the TatABC complex, which probably triggers association of the separate TatA complex to form the active translocon.

The protein resides in the cell membrane. Its function is as follows. Part of the twin-arginine translocation (Tat) system that transports large folded proteins containing a characteristic twin-arginine motif in their signal peptide across membranes. Together with TatC, TatB is part of a receptor directly interacting with Tat signal peptides. TatB may form an oligomeric binding site that transiently accommodates folded Tat precursor proteins before their translocation. The sequence is that of Sec-independent protein translocase protein TatB from Streptomyces avermitilis (strain ATCC 31267 / DSM 46492 / JCM 5070 / NBRC 14893 / NCIMB 12804 / NRRL 8165 / MA-4680).